The primary structure comprises 135 residues: Galectin-1 (135 aa).

A2 carries the post-translational modification N-acetylalanine. One can recognise a Galectin domain in the interval 4-135; it reads GLVASNLNLK…DFKIKCVAFD (132 aa). An N6-acetyllysine mark is found at K13 and K29. Position 30 is a phosphoserine (S30). Residues 45–49, H53, N62, and 69–72 each bind a beta-D-galactoside; these read HFNPR and WGAE. Position 108 is an N6-acetyllysine; alternate (K108). K108 is subject to N6-succinyllysine; alternate. Residue K128 is modified to N6-acetyllysine.

As to quaternary structure, homodimer. Binds LGALS3BP. Interacts with CD2, CD3, CD4, CD6, CD7, CD43, ALCAM and CD45. Interacts with laminin (via poly-N-acetyllactosamine). Interacts with SUSD2. Interacts with cargo receptor TMED10; the interaction mediates the translocation from the cytoplasm into the ERGIC (endoplasmic reticulum-Golgi intermediate compartment) and thereby secretion. The N-terminus is blocked.

The protein resides in the secreted. Its subcellular location is the extracellular space. It localises to the extracellular matrix. The protein localises to the cytoplasm. In terms of biological role, lectin that binds beta-galactoside and a wide array of complex carbohydrates. Plays a role in regulating apoptosis, cell proliferation and cell differentiation. Inhibits CD45 protein phosphatase activity and therefore the dephosphorylation of Lyn kinase. Strong inducer of T-cell apoptosis. This Bubalus bubalis (Domestic water buffalo) protein is Galectin-1.